A 258-amino-acid polypeptide reads, in one-letter code: Deoxyribose-phosphate aldolase 2 (258 aa).

The Proton donor/acceptor role is filled by Asp102. The active-site Schiff-base intermediate with acetaldehyde is the Lys165. The active-site Proton donor/acceptor is the Lys199.

It belongs to the DeoC/FbaB aldolase family. DeoC type 2 subfamily.

The protein resides in the cytoplasm. The enzyme catalyses 2-deoxy-D-ribose 5-phosphate = D-glyceraldehyde 3-phosphate + acetaldehyde. The protein operates within carbohydrate degradation; 2-deoxy-D-ribose 1-phosphate degradation; D-glyceraldehyde 3-phosphate and acetaldehyde from 2-deoxy-alpha-D-ribose 1-phosphate: step 2/2. Catalyzes a reversible aldol reaction between acetaldehyde and D-glyceraldehyde 3-phosphate to generate 2-deoxy-D-ribose 5-phosphate. This chain is Deoxyribose-phosphate aldolase 2 (deoC2), found in Vibrio vulnificus (strain YJ016).